Reading from the N-terminus, the 178-residue chain is Inorganic pyrophosphatase (178 aa).

3 residues coordinate substrate: lysine 30, arginine 44, and tyrosine 56. 3 residues coordinate Mg(2+): aspartate 66, aspartate 71, and aspartate 103. Position 140 (tyrosine 140) interacts with substrate.

It belongs to the PPase family. Homohexamer. It depends on Mg(2+) as a cofactor.

It is found in the cytoplasm. It catalyses the reaction diphosphate + H2O = 2 phosphate + H(+). Catalyzes the hydrolysis of inorganic pyrophosphate (PPi) forming two phosphate ions. The polypeptide is Inorganic pyrophosphatase (Pyrococcus horikoshii (strain ATCC 700860 / DSM 12428 / JCM 9974 / NBRC 100139 / OT-3)).